The chain runs to 271 residues: Interleukin-1 alpha (271 aa).

Residues 1-112 (MAKVPDMFED…DSEEEIIKPR (112 aa)) constitute a propeptide that is removed on maturation. Lys-82 is subject to N6-acetyllysine. Residues 82-86 (KKRRL) form a nuclear localization signal (NLS) region. Ser-87 bears the Phosphoserine mark. Asn-102 and Asn-141 each carry an N-linked (GlcNAc...) asparagine glycan.

The protein belongs to the IL-1 family. Monomer. Interacts with TMED10; the interaction mediates the translocation from the cytoplasm into the ERGIC (endoplasmic reticulum-Golgi intermediate compartment) and thereby secretion. Interacts with IL1R1. Interacts with S100A13; this interaction is the first step in the export of IL1A, followed by direct translocation of this complex across the plasma membrane. Acetylated within its nuclear localization sequence, which impacts subcellular localization. Post-translationally, proteolytic processed by CAPN1 in a calcium-dependent manner. Cleavage from 31 kDa precursor to 18 kDa biologically active molecules. In terms of processing, phosphorylated. Phosphorylation greatly enhances susceptibility to digestion and promotes the conversion of pre-IL1A alpha to the biologically active IL1A.

It localises to the nucleus. The protein localises to the cytoplasm. Its subcellular location is the secreted. Functionally, cytokine constitutively present intracellularly in nearly all resting non-hematopoietic cells that plays an important role in inflammation and bridges the innate and adaptive immune systems. After binding to its receptor IL1R1 together with its accessory protein IL1RAP, forms the high affinity interleukin-1 receptor complex. Signaling involves the recruitment of adapter molecules such as MYD88, IRAK1 or IRAK4. In turn, mediates the activation of NF-kappa-B and the three MAPK pathways p38, p42/p44 and JNK pathways. Within the cell, acts as an alarmin and cell death results in its liberation in the extracellular space after disruption of the cell membrane to induce inflammation and alert the host to injury or damage. In addition to its role as a danger signal, which occurs when the cytokine is passively released by cell necrosis, directly senses DNA damage and acts as signal for genotoxic stress without loss of cell integrity. This chain is Interleukin-1 alpha (IL1A), found in Cercocebus atys (Sooty mangabey).